The sequence spans 438 residues: tRNA-dihydrouridine(16/17) synthase [NAD(P)(+)]-like (438 aa).

FMN is bound by residues Pro-23 to Val-25 and Gln-79. Residue Cys-108 is the Proton donor of the active site. FMN is bound by residues Lys-147, His-175, Asn-208–Asn-210, and Ala-232–Glu-233. A disordered region spans residues Gly-343–Asp-387. Residues Asn-373–His-383 are compositionally biased toward basic residues.

It belongs to the Dus family. Dus1 subfamily. It depends on FMN as a cofactor.

It localises to the cytoplasm. The protein resides in the nucleus. The enzyme catalyses 5,6-dihydrouridine(16) in tRNA + NADP(+) = uridine(16) in tRNA + NADPH + H(+). It carries out the reaction 5,6-dihydrouridine(16) in tRNA + NAD(+) = uridine(16) in tRNA + NADH + H(+). The catalysed reaction is 5,6-dihydrouridine(17) in tRNA + NAD(+) = uridine(17) in tRNA + NADH + H(+). It catalyses the reaction 5,6-dihydrouridine(17) in tRNA + NADP(+) = uridine(17) in tRNA + NADPH + H(+). In terms of biological role, catalyzes the synthesis of dihydrouridine, a modified base found in the D-loop of most tRNAs. Specifically modifies U16 and U17 in cytoplasmic tRNAs. Affects the level of some mature tRNA and thereby the total cellular translation. In Rattus norvegicus (Rat), this protein is tRNA-dihydrouridine(16/17) synthase [NAD(P)(+)]-like (Dus1l).